The chain runs to 405 residues: Tryptophan synthase beta chain (405 aa).

Position 98 is an N6-(pyridoxal phosphate)lysine (Lys98).

The protein belongs to the TrpB family. In terms of assembly, tetramer of two alpha and two beta chains. Requires pyridoxal 5'-phosphate as cofactor.

The catalysed reaction is (1S,2R)-1-C-(indol-3-yl)glycerol 3-phosphate + L-serine = D-glyceraldehyde 3-phosphate + L-tryptophan + H2O. The protein operates within amino-acid biosynthesis; L-tryptophan biosynthesis; L-tryptophan from chorismate: step 5/5. In terms of biological role, the beta subunit is responsible for the synthesis of L-tryptophan from indole and L-serine. This is Tryptophan synthase beta chain from Afipia carboxidovorans (strain ATCC 49405 / DSM 1227 / KCTC 32145 / OM5) (Oligotropha carboxidovorans).